Consider the following 329-residue polypeptide: NAD kinase (329 aa).

A disordered region spans residues M1–G26. Catalysis depends on D104, which acts as the Proton acceptor. NAD(+) is bound by residues D104 to G105, R109, N179 to E180, D209, and T220 to S225.

Belongs to the NAD kinase family. Requires a divalent metal cation as cofactor.

Its subcellular location is the cytoplasm. The catalysed reaction is NAD(+) + ATP = ADP + NADP(+) + H(+). Its function is as follows. Involved in the regulation of the intracellular balance of NAD and NADP, and is a key enzyme in the biosynthesis of NADP. Catalyzes specifically the phosphorylation on 2'-hydroxyl of the adenosine moiety of NAD to yield NADP. The sequence is that of NAD kinase from Corynebacterium jeikeium (strain K411).